We begin with the raw amino-acid sequence, 172 residues long: R-phycocyanin-2 beta chain (172 aa).

At Asn72 the chain carries N4-methylasparagine. Residue Cys82 coordinates (2R,3E)-phycocyanobilin. Cys153 is a binding site for (2R,3E)-phycoerythrobilin.

It belongs to the phycobiliprotein family. Heterodimer of an alpha and a beta chain. Post-translationally, contains two covalently linked bilin chromophores.

It localises to the cellular thylakoid membrane. Functionally, light-harvesting photosynthetic bile pigment-protein from the phycobiliprotein complex. This Synechococcus sp. (strain WH8103) protein is R-phycocyanin-2 beta chain (rpcB).